A 180-amino-acid chain; its full sequence is Early nodulin-16 (180 aa).

The signal sequence occupies residues 1 to 22; sequence MASSSPILLMIIFSMWLLISHS. A Phytocyanin domain is found at 25–129; the sequence is TDYLIGDSHN…GLKLAVVVQN (105 aa). Asn-67 carries an N-linked (GlcNAc...) asparagine glycan. A disulfide bridge connects residues Cys-83 and Cys-117. Asn-152 carries N-linked (GlcNAc...) asparagine glycosylation. Ser-154 carries the GPI-anchor amidated serine lipid modification. A propeptide spans 155–180 (removed in mature form); that stretch reads GNKGGAAGLGFIMWLGVSLVMMMFLI.

Belongs to the early nodulin-like (ENODL) family. In terms of tissue distribution, expressed in developing nodules upon symbiosis with Sinorhizobium meliloti.

Its subcellular location is the symbiosome. It localises to the cell membrane. In terms of biological role, may act as a carbohydrate transporter. The chain is Early nodulin-16 from Medicago truncatula (Barrel medic).